The chain runs to 125 residues: Evasin P672 (125 aa).

Positions 1 to 21 (MAHKIAIGLVCVLYALHIMSA) are cleaved as a signal peptide. 8 N-linked (GlcNAc...) asparagine glycosylation sites follow: asparagine 35, asparagine 55, asparagine 65, asparagine 72, asparagine 78, asparagine 104, asparagine 112, and asparagine 118. 3 disulfides stabilise this stretch: cysteine 70–cysteine 110, cysteine 87–cysteine 115, and cysteine 105–cysteine 124.

It localises to the secreted. Salivary chemokine-binding protein which has chemokine-neutralizing activity and binds to host chemokines CCL1, CCL2, CCL3, CCL3L1, CCL7, CCL8, CCL11, CCL12, CCL13, CCL14, CCL15, CCL16, CCL18 and CCL23. Binds to CCL8 with 1:1 stoichiometry and disrupts CCL8 homodimer formation. The protein is Evasin P672 of Rhipicephalus pulchellus (Yellow backed tick).